Consider the following 440-residue polypeptide: APO protein 2, chloroplastic (440 aa).

Residues 1–62 constitute a chloroplast transit peptide; sequence MSITYSAISF…SLQLNSRVVL (62 aa). A compositionally biased stretch (basic and acidic residues) spans 106 to 115; sequence ARERVKNNKD. A disordered region spans residues 106–126; it reads ARERVKNNKDKPKRPLPPPKN. APO domains are found at residues 162-247 and 332-417; these read ACGW…EIPE and VCGY…VVPE.

The protein belongs to the APO family.

Its subcellular location is the plastid. The protein resides in the chloroplast. May be involved in the stable assembly of several 4Fe-4S cluster-containing complexes of chloroplasts. This is APO protein 2, chloroplastic (APO2) from Arabidopsis thaliana (Mouse-ear cress).